Here is a 99-residue protein sequence, read N- to C-terminus: Nucleoid-associated protein SUB1611 (99 aa).

Belongs to the YbaB/EbfC family. In terms of assembly, homodimer.

The protein resides in the cytoplasm. It localises to the nucleoid. In terms of biological role, binds to DNA and alters its conformation. May be involved in regulation of gene expression, nucleoid organization and DNA protection. This is Nucleoid-associated protein SUB1611 from Streptococcus uberis (strain ATCC BAA-854 / 0140J).